Here is an 89-residue protein sequence, read N- to C-terminus: DNA-binding protein HU (89 aa).

The protein belongs to the bacterial histone-like protein family. As to quaternary structure, homodimer. The dimer interacts with the DNA mimic protein DMP12. It also interacts with the monomeric form of the DNA mimic protein DMP19 with 1:1 stoichiometry.

With respect to regulation, activity is regulated by the DNA mimic protein DMP12. Activity is inhibited in the presence of the DNA mimic protein DMP19, which interacts with HU and prevents the binding of HU to DNA. In terms of biological role, histone-like DNA-binding protein which is capable of wrapping DNA to stabilize it, and thus to prevent its denaturation under extreme environmental conditions. The polypeptide is DNA-binding protein HU (Neisseria meningitidis serogroup B (strain ATCC BAA-335 / MC58)).